A 151-amino-acid polypeptide reads, in one-letter code: 3-hydroxyacyl-[acyl-carrier-protein] dehydratase FabZ (151 aa).

H54 is a catalytic residue.

Belongs to the thioester dehydratase family. FabZ subfamily. Oligomer. Post-translationally, the N-terminus is blocked.

The protein resides in the cytoplasm. The catalysed reaction is a (3R)-hydroxyacyl-[ACP] = a (2E)-enoyl-[ACP] + H2O. Involved in unsaturated fatty acids biosynthesis. Catalyzes the dehydration of short chain beta-hydroxyacyl-ACPs and long chain saturated and unsaturated beta-hydroxyacyl-ACPs. In Escherichia coli O9:H4 (strain HS), this protein is 3-hydroxyacyl-[acyl-carrier-protein] dehydratase FabZ.